The chain runs to 438 residues: Glycerophosphocholine cholinephosphodiesterase ENPP6 (438 aa).

An N-terminal signal peptide occupies residues 1–22 (MTRTLLKIYTLFILLLCRQRDA). Residues Asp-32, Ser-69, and Asn-90 each contribute to the substrate site. Zn(2+) contacts are provided by Asp-32 and Ser-69. Ser-69 (nucleophile) is an active-site residue. Ser-69 bears the Phosphoserine mark. The cysteines at positions 140 and 152 are disulfide-linked. Positions 162–226 (KNLTDSMENA…ILNQKIREKN (65 aa)) form a coiled coil. An N-linked (GlcNAc...) asparagine glycan is attached at Asn-163. Asp-191 is a binding site for substrate. Zn(2+) contacts are provided by Asp-191, His-195, Asp-238, and His-239. A substrate-binding site is contributed by His-239. Asn-258, Asn-287, and Asn-339 each carry an N-linked (GlcNAc...) asparagine glycan. Substrate is bound at residue His-352. His-352 is a Zn(2+) binding site. N-linked (GlcNAc...) asparagine glycosylation is present at Asn-402. Ser-415 carries GPI-anchor amidated serine lipidation. The propeptide at 416–438 (AATAGASLISCCFLLLLTLTGVC) is removed in mature form.

Belongs to the nucleotide pyrophosphatase/phosphodiesterase family. Zn(2+) is required as a cofactor.

The protein resides in the cell membrane. It carries out the reaction sn-glycerol 3-phosphocholine + H2O = phosphocholine + glycerol + H(+). The catalysed reaction is a 1-acyl-sn-glycero-3-phosphocholine + H2O = a 1-acyl-sn-glycerol + phosphocholine + H(+). It catalyses the reaction a 1-O-alkyl-sn-glycero-3-phosphocholine + H2O = a 1-O-alkyl-sn-glycerol + phosphocholine + H(+). The enzyme catalyses 1-dodecanoyl-sn-glycero-3-phosphocholine + H2O = 1-dodecanoyl-sn-glycerol + phosphocholine + H(+). It carries out the reaction 1-hexadecanoyl-sn-glycero-3-phosphocholine + H2O = 1-hexadecanoyl-sn-glycerol + phosphocholine + H(+). The catalysed reaction is 1-(5Z,8Z,11Z,14Z-eicosatetraenoyl)-sn-glycero-3-phosphocholine + H2O = 1-(5Z,8Z,11Z,14Z-eicosatetraenoyl)-sn-glycerol + phosphocholine + H(+). It catalyses the reaction 1-tetradecanoyl-sn-glycero-3-phosphocholine + H2O = 1-tetradecanoyl-sn-glycerol + phosphocholine + H(+). The enzyme catalyses sphing-4-enine-phosphocholine + H2O = sphing-4-enine + phosphocholine + H(+). It carries out the reaction 1-(9Z-octadecenoyl)-sn-glycero-3-phosphocholine + H2O = 1-(9Z-octadecenoyl)-sn-glycerol + phosphocholine + H(+). The catalysed reaction is 1-(9Z,12Z)-octadecadienoyl-sn-glycero-3-phosphocholine + H2O = 1-(9Z,12Z-octadecadienoyl)-sn-glycerol + phosphocholine + H(+). It catalyses the reaction glycero-2-phosphocholine + H2O = phosphocholine + glycerol + H(+). In terms of biological role, choline-specific glycerophosphodiesterase that hydrolyzes glycerophosphocholine (GPC) and lysophosphatidylcholine (LPC) and contributes to supplying choline to the cells. Has a preference for LPC with short (12:0 and 14:0) or polyunsaturated (18:2 and 20:4) fatty acids. In vitro, hydrolyzes only choline-containing lysophospholipids, such as sphingosylphosphorylcholine (SPC), platelet-activating factor (PAF) and lysoPAF, but not other lysophospholipids. This is Glycerophosphocholine cholinephosphodiesterase ENPP6 from Danio rerio (Zebrafish).